Reading from the N-terminus, the 220-residue chain is Probable acrEF/envCD operon repressor (220 aa).

An HTH tetR-type domain is found at 10-70; it reads LKTRQELIET…EMWLQQPSLR (61 aa). Residues 33–52 constitute a DNA-binding region (H-T-H motif); that stretch reads TLNDIADAANVTRGAIYWHF.

Potential regulator protein for the acrEF/envCD genes. The polypeptide is Probable acrEF/envCD operon repressor (envR) (Escherichia coli O157:H7).